Here is a 143-residue protein sequence, read N- to C-terminus: Large ribosomal subunit protein uL13 (143 aa).

The protein belongs to the universal ribosomal protein uL13 family. Part of the 50S ribosomal subunit.

Functionally, this protein is one of the early assembly proteins of the 50S ribosomal subunit, although it is not seen to bind rRNA by itself. It is important during the early stages of 50S assembly. This Prochlorococcus marinus subsp. pastoris (strain CCMP1986 / NIES-2087 / MED4) protein is Large ribosomal subunit protein uL13.